The chain runs to 371 residues: Spermatogenic leucine zipper protein 1 (371 aa).

Coiled coils occupy residues 96–148 (EVSE…TVQD) and 177–289 (FPHI…QKEE). The residue at position 98 (Ser-98) is a Phosphoserine. The tract at residues 110–120 (INKELVKKLLA) is helix-loop-helix motif. The interval 121-188 (SLDLGKKENA…HIQEENIRLR (68 aa)) is basic motif. Ser-202 is subject to Phosphoserine. Polar residues predominate over residues 223–240 (KTLKNNGTHSPTQTNNES). Residues 223-246 (KTLKNNGTHSPTQTNNESAKQELE) are disordered. The tract at residues 245 to 266 (LEEQVKRLKEDTYSLHLIATLL) is leucine-zipper.

In terms of processing, phosphorylated by MAPK1/ERK2 and MAPK3/ERK1.

It localises to the cytoplasm. The protein resides in the nucleus. Transcription factor that binds to the DNA sequence 5'-CANNTG-3'(E box) and the G-box motif. May play an important role in the regulation of cell proliferation and differentiation during spermatogenesis. This Bos taurus (Bovine) protein is Spermatogenic leucine zipper protein 1 (SPZ1).